A 323-amino-acid polypeptide reads, in one-letter code: NADH-cytochrome b5 reductase 2 (323 aa).

The chain crosses the membrane as a helical span at residues 32–48; that stretch reads LAPIYLGVGLIGLGVGL. An FAD-binding FR-type domain is found at 72–177; the sequence is QGWVDLKLAQ…KGPIPKYPWE (106 aa). 180 to 215 is a binding site for FAD; sequence KHKHICLIAGGTGITPMYQLARKIFKDPEDQTKVTL.

This sequence belongs to the flavoprotein pyridine nucleotide cytochrome reductase family. FAD is required as a cofactor.

It is found in the mitochondrion outer membrane. The catalysed reaction is 2 Fe(III)-[cytochrome b5] + NADH = 2 Fe(II)-[cytochrome b5] + NAD(+) + H(+). Functionally, may mediate the reduction of outer membrane cytochrome b5. In Aspergillus fumigatus (strain ATCC MYA-4609 / CBS 101355 / FGSC A1100 / Af293) (Neosartorya fumigata), this protein is NADH-cytochrome b5 reductase 2 (mcr1).